A 446-amino-acid polypeptide reads, in one-letter code: T-box transcription factor TBX20 (446 aa).

The segment at 50 to 80 (SCHPNLGDLPPLETHSDFSSGGGTGSGAPLC) is disordered. Positions 108 to 287 (LWDKFHELGT…SNPFAKGFRD (180 aa)) form a DNA-binding region, T-box.

Its subcellular location is the nucleus. Functionally, transcriptional regulator that may play a very early role in the differentiation of the cardiac precursors. This Danio rerio (Zebrafish) protein is T-box transcription factor TBX20 (tbx20).